Here is a 146-residue protein sequence, read N- to C-terminus: Large ribosomal subunit protein uL15 (146 aa).

The segment at 1–54 (MKLHELKPAAGSKKAPKRIGRGTGSGLGRNAGKGEKGQNARSGGGVRPGFEGGQ) is disordered. Gly residues-rich tracts occupy residues 21 to 31 (RGTGSGLGRNA) and 42 to 52 (SGGGVRPGFEG).

The protein belongs to the universal ribosomal protein uL15 family. In terms of assembly, part of the 50S ribosomal subunit.

Binds to the 23S rRNA. The protein is Large ribosomal subunit protein uL15 of Clostridium beijerinckii (strain ATCC 51743 / NCIMB 8052) (Clostridium acetobutylicum).